We begin with the raw amino-acid sequence, 280 residues long: uncharacterized protein (280 aa).

Residues 96–208 enclose the DUF1279 domain; sequence DKSIGIFQRF…GYLSTPPPVK (113 aa). A helical transmembrane segment spans residues 115 to 135; that stretch reads VMVPVHIVTSTVWFGSFYYAA. The stretch at 207–274 forms a coiled coil; that stretch reads VKEFLQDKME…KLQETKDKMS (68 aa). The tract at residues 245-280 is disordered; sequence SERMEETKERFSETKDKFSEKLQETKDKMSFRKKAD.

It is found in the membrane. This is an uncharacterized protein from Danio rerio (Zebrafish).